A 202-amino-acid chain; its full sequence is Adenylyl-sulfate kinase (202 aa).

31-38 (GLSASGKS) contributes to the ATP binding site. The Phosphoserine intermediate role is filled by serine 105.

The protein belongs to the APS kinase family.

The catalysed reaction is adenosine 5'-phosphosulfate + ATP = 3'-phosphoadenylyl sulfate + ADP + H(+). It functions in the pathway sulfur metabolism; hydrogen sulfide biosynthesis; sulfite from sulfate: step 2/3. In terms of biological role, catalyzes the synthesis of activated sulfate. This chain is Adenylyl-sulfate kinase (MET14), found in Saccharomyces pastorianus (Lager yeast).